The chain runs to 478 residues: Kynureninase (478 aa).

Residues Leu-150, Thr-151, 178–181 (FPSD), Ser-234, Asp-263, His-266, and Tyr-288 contribute to the pyridoxal 5'-phosphate site. Lys-289 bears the N6-(pyridoxal phosphate)lysine mark. Pyridoxal 5'-phosphate is bound by residues Trp-318 and Asn-346.

Belongs to the kynureninase family. Homodimer. Pyridoxal 5'-phosphate is required as a cofactor.

The protein resides in the cytoplasm. The catalysed reaction is L-kynurenine + H2O = anthranilate + L-alanine + H(+). It catalyses the reaction 3-hydroxy-L-kynurenine + H2O = 3-hydroxyanthranilate + L-alanine + H(+). It functions in the pathway amino-acid degradation; L-kynurenine degradation; L-alanine and anthranilate from L-kynurenine: step 1/1. Its pathway is cofactor biosynthesis; NAD(+) biosynthesis; quinolinate from L-kynurenine: step 2/3. Catalyzes the cleavage of L-kynurenine (L-Kyn) and L-3-hydroxykynurenine (L-3OHKyn) into anthranilic acid (AA) and 3-hydroxyanthranilic acid (3-OHAA), respectively. This chain is Kynureninase, found in Caenorhabditis elegans.